An 847-amino-acid chain; its full sequence is Follistatin-related protein 5 (847 aa).

A signal peptide spans 1–20 (MFRCWSAILILGFIFLASEG). Residues 81–135 (ETRHAECACMDLCKQHYKPVCGSDGEFYENHCEVHRAACLKKQKITIVHNEDCFF) enclose the Kazal-like domain. Disulfide bonds link Cys-87-Cys-119, Cys-93-Cys-112, and Cys-101-Cys-133. 2 consecutive EF-hand domains span residues 175–210 (RKKP…EELN) and 211–246 (KDLS…QVIQ). Ca(2+) is bound by residues Asp-188, Asp-190, Asn-192, Glu-199, Asp-226, Asn-228, Asp-230, His-232, and Glu-237. 2 Ig-like domains span residues 250-338 (PEDQ…FQVN) and 341-426 (PVIR…EDIS). Cystine bridges form between Cys-270-Cys-321 and Cys-362-Cys-413. N-linked (GlcNAc...) asparagine glycosylation is found at Asn-318 and Asn-394.

It is found in the secreted. This is Follistatin-related protein 5 (Fstl5) from Mus musculus (Mouse).